Consider the following 325-residue polypeptide: Probable cell division protein WhiA (325 aa).

The segment at residues 280 to 313 (SLKELGNMLEKPLGKSGVNHRLRKIDKIAEELRK) is a DNA-binding region (H-T-H motif).

This sequence belongs to the WhiA family.

In terms of biological role, involved in cell division and chromosome segregation. This chain is Probable cell division protein WhiA, found in Caldicellulosiruptor bescii (strain ATCC BAA-1888 / DSM 6725 / KCTC 15123 / Z-1320) (Anaerocellum thermophilum).